The primary structure comprises 248 residues: DNA repair protein RecO (248 aa).

The protein belongs to the RecO family.

In terms of biological role, involved in DNA repair and RecF pathway recombination. The sequence is that of DNA repair protein RecO from Thermoanaerobacter sp. (strain X514).